The following is a 57-amino-acid chain: MKIIHVLLLVAVVAITMSPSIMAESVAEADKPGQAKKIGLFDQIDKAAAAFMKLFEG.

An N-terminal signal peptide occupies residues 1–23 (MKIIHVLLLVAVVAITMSPSIMA). The propeptide occupies 24–29 (ESVAEA). A Glutamic acid 1-amide modification is found at E56.

In terms of tissue distribution, expressed by the venom gland.

It is found in the secreted. Induces paralysis 1 hour after injection into insects (blowfly L.caesar) but does not appear to be lethal. In Manica rubida (European giant red ant), this protein is U13-myrmicitoxin-Mri1a.